Reading from the N-terminus, the 72-residue chain is Crustacean hyperglycemic hormone (72 aa).

Pyrrolidone carboxylic acid is present on Gln-1. Phe-3 is modified (D-phenylalanine; in form CHH-II). 3 disulfide bridges follow: Cys-7-Cys-43, Cys-23-Cys-39, and Cys-26-Cys-52. Val-72 is subject to Valine amide.

Stereoinversion of L-Phe (in CHH-I) to D-Phe (in CHH-II) the two forms are present in a ratio 3:1 (CHH-I/CHH-II). Produced by the medulla terminalis X-organ in the eyestalks and transported to the sinus gland where they are stored and released.

It localises to the secreted. In terms of biological role, hormone found in the sinus gland of isopods and decapods which controls the blood sugar level. Has a secretagogue action over the amylase released from the midgut gland. May act as a stress hormone and may be involved in the control of molting and reproduction. This Procambarus bouvieri (Mexican crayfish) protein is Crustacean hyperglycemic hormone.